A 275-amino-acid chain; its full sequence is Elongation factor Ts (275 aa).

An involved in Mg(2+) ion dislocation from EF-Tu region spans residues 80-83 (TDFV).

Belongs to the EF-Ts family.

The protein localises to the cytoplasm. Associates with the EF-Tu.GDP complex and induces the exchange of GDP to GTP. It remains bound to the aminoacyl-tRNA.EF-Tu.GTP complex up to the GTP hydrolysis stage on the ribosome. The protein is Elongation factor Ts of Kineococcus radiotolerans (strain ATCC BAA-149 / DSM 14245 / SRS30216).